Reading from the N-terminus, the 49-residue chain is Disintegrin ocellatin (49 aa).

A Disintegrin domain is found at 1–47 (DCESGPCCDNCKFLKEGTICKMARGDNMHHYCNGKTCDCPRNPYKGE). 4 disulfide bridges follow: C2–C11, C7–C32, C8–C37, and C20–C39. Positions 24 to 26 (RGD) match the Cell attachment site motif.

This sequence belongs to the venom metalloproteinase (M12B) family. P-II subfamily. P-IIa sub-subfamily. In terms of assembly, monomer. Expressed by the venom gland.

The protein resides in the secreted. In terms of biological role, inhibits ADP-induced human platelet aggregation. The polypeptide is Disintegrin ocellatin (Echis ocellatus (Ocellated saw-scaled viper)).